Consider the following 743-residue polypeptide: 1,4-alpha-glucan branching enzyme GlgB (743 aa).

D416 functions as the Nucleophile in the catalytic mechanism. E469 functions as the Proton donor in the catalytic mechanism.

This sequence belongs to the glycosyl hydrolase 13 family. GlgB subfamily. As to quaternary structure, monomer.

The enzyme catalyses Transfers a segment of a (1-&gt;4)-alpha-D-glucan chain to a primary hydroxy group in a similar glucan chain.. The protein operates within glycan biosynthesis; glycogen biosynthesis. Its function is as follows. Catalyzes the formation of the alpha-1,6-glucosidic linkages in glycogen by scission of a 1,4-alpha-linked oligosaccharide from growing alpha-1,4-glucan chains and the subsequent attachment of the oligosaccharide to the alpha-1,6 position. The sequence is that of 1,4-alpha-glucan branching enzyme GlgB from Shewanella baltica (strain OS195).